The chain runs to 124 residues: Cytochrome c2 (124 aa).

Gln-1 is modified (pyrrolidone carboxylic acid). 4 residues coordinate heme c: Cys-16, Cys-19, His-20, and Met-85.

The protein belongs to the cytochrome c family. Binds 1 heme c group covalently per subunit.

The protein localises to the periplasm. Functionally, cytochrome c2 is found mainly in purple, non-sulfur, photosynthetic bacteria where it functions as the electron donor to the oxidized bacteriochlorophyll in the photophosphorylation pathway. However, it may also have a role in the respiratory chain and is found in some non-photosynthetic bacteria. This Afifella marina (Rhodobium marinum) protein is Cytochrome c2.